A 445-amino-acid chain; its full sequence is F-box protein At5g10340 (445 aa).

The 49-residue stretch at 64-112 (SMEELLPHDVIEYHIMVRLDVKTLLKFKSVSKQWMSTIQSPSFQERQLI) folds into the F-box domain.

In Arabidopsis thaliana (Mouse-ear cress), this protein is F-box protein At5g10340.